The chain runs to 255 residues: uncharacterized protein (255 aa).

2 helical membrane passes run 2–22 (LLPA…YGVL) and 168–188 (VASV…FNLF).

Its subcellular location is the cell membrane. This is an uncharacterized protein from Mycobacterium tuberculosis (strain ATCC 25618 / H37Rv).